Here is a 507-residue protein sequence, read N- to C-terminus: Glycerol kinase 2 (507 aa).

An ADP-binding site is contributed by Thr16. Thr16, Thr17, and Ser18 together coordinate ATP. Thr16 serves as a coordination point for sn-glycerol 3-phosphate. An ADP-binding site is contributed by Arg20. Residues Arg86, Glu87, Tyr138, and Asp248 each contribute to the sn-glycerol 3-phosphate site. The glycerol site is built by Arg86, Glu87, Tyr138, Asp248, and Gln249. 2 residues coordinate ADP: Thr270 and Gly314. 4 residues coordinate ATP: Thr270, Gly314, Gln318, and Gly415. Positions 415 and 419 each coordinate ADP.

The protein belongs to the FGGY kinase family.

It catalyses the reaction glycerol + ATP = sn-glycerol 3-phosphate + ADP + H(+). The protein operates within polyol metabolism; glycerol degradation via glycerol kinase pathway; sn-glycerol 3-phosphate from glycerol: step 1/1. Its activity is regulated as follows. Inhibited by fructose 1,6-bisphosphate (FBP). In terms of biological role, key enzyme in the regulation of glycerol uptake and metabolism. Catalyzes the phosphorylation of glycerol to yield sn-glycerol 3-phosphate. This chain is Glycerol kinase 2, found in Streptomyces avermitilis (strain ATCC 31267 / DSM 46492 / JCM 5070 / NBRC 14893 / NCIMB 12804 / NRRL 8165 / MA-4680).